We begin with the raw amino-acid sequence, 381 residues long: Diguanylate cyclase DosC (381 aa).

Histidine 98 serves as a coordination point for heme. The region spanning 325-381 (TPLSVLIIDVDKFKEINDTWGHNTGDEILRKVSFLSQKRLVKSKILGAGSSRKLAVS) is the GGDEF domain. A Mg(2+)-binding site is contributed by aspartate 333. Residues asparagine 341 and aspartate 350 each contribute to the substrate site.

Heme serves as cofactor. Mg(2+) is required as a cofactor.

The catalysed reaction is 2 GTP = 3',3'-c-di-GMP + 2 diphosphate. It functions in the pathway purine metabolism; 3',5'-cyclic di-GMP biosynthesis. Globin-coupled heme-based oxygen sensor protein displaying diguanylate cyclase (DGC) activity in response to oxygen availability. Thus, catalyzes the synthesis of cyclic diguanylate (c-di-GMP) via the condensation of 2 GTP molecules. Cyclic-di-GMP is a second messenger which controls cell surface-associated traits in bacteria. This Shigella flexneri serotype 5b (strain 8401) protein is Diguanylate cyclase DosC (dosC).